A 377-amino-acid chain; its full sequence is Nitric oxide reductase FlRd-NAD(+) reductase (377 aa).

This sequence belongs to the FAD-dependent oxidoreductase family. The cofactor is FAD.

The protein localises to the cytoplasm. It catalyses the reaction 2 reduced [nitric oxide reductase rubredoxin domain] + NAD(+) + H(+) = 2 oxidized [nitric oxide reductase rubredoxin domain] + NADH. Its pathway is nitrogen metabolism; nitric oxide reduction. In terms of biological role, one of at least two accessory proteins for anaerobic nitric oxide (NO) reductase. Reduces the rubredoxin moiety of NO reductase. In Escherichia coli O6:H1 (strain CFT073 / ATCC 700928 / UPEC), this protein is Nitric oxide reductase FlRd-NAD(+) reductase.